A 321-amino-acid chain; its full sequence is Endochitinase 33 (321 aa).

The signal sequence occupies residues 1-19 (MPSLTALASLLALVPSALA). Residues 27–321 (QNIAVYWGQN…FETQVVNALR (295 aa)) form the GH18 domain. Glu-167 functions as the Proton donor in the catalytic mechanism.

This sequence belongs to the glycosyl hydrolase 18 family. Chitinase class III subfamily. Monomer.

It localises to the secreted. The enzyme catalyses Random endo-hydrolysis of N-acetyl-beta-D-glucosaminide (1-&gt;4)-beta-linkages in chitin and chitodextrins.. Its function is as follows. Secreted chitinase involved in the degradation of chitin, a component of the cell walls of fungi and exoskeletal elements of some animals (including worms and arthropods). Plays a morphogenetic role during apical growth, cell division and differentiation (cell wall morphogenesis). May be involved in the degradation and further assimilation of phytopathogenic fungi, namely mycoparasitism, the major mechanism accounting for the antagonistic activity against phytopathogenic fungi displayed by Trichoderma. The protein is Endochitinase 33 (chit33) of Trichoderma harzianum (Hypocrea lixii).